We begin with the raw amino-acid sequence, 337 residues long: Anthranilate phosphoribosyltransferase (337 aa).

5-phospho-alpha-D-ribose 1-diphosphate contacts are provided by residues Gly-81, 84 to 85 (GD), Ser-89, 91 to 94 (NVST), 109 to 117 (KHGNRALSS), and Ala-121. Anthranilate is bound at residue Gly-81. Residue Ser-93 participates in Mg(2+) binding. Anthranilate is bound at residue Asn-112. Residue Arg-167 coordinates anthranilate. 2 residues coordinate Mg(2+): Asp-226 and Glu-227.

It belongs to the anthranilate phosphoribosyltransferase family. As to quaternary structure, homodimer. Requires Mg(2+) as cofactor.

It catalyses the reaction N-(5-phospho-beta-D-ribosyl)anthranilate + diphosphate = 5-phospho-alpha-D-ribose 1-diphosphate + anthranilate. Its pathway is amino-acid biosynthesis; L-tryptophan biosynthesis; L-tryptophan from chorismate: step 2/5. Its function is as follows. Catalyzes the transfer of the phosphoribosyl group of 5-phosphorylribose-1-pyrophosphate (PRPP) to anthranilate to yield N-(5'-phosphoribosyl)-anthranilate (PRA). This chain is Anthranilate phosphoribosyltransferase, found in Bradyrhizobium sp. (strain ORS 278).